The sequence spans 240 residues: Fimbriae Y protein (240 aa).

It localises to the fimbrium. This is Fimbriae Y protein (fimY) from Salmonella typhimurium (strain LT2 / SGSC1412 / ATCC 700720).